The sequence spans 111 residues: Large ribosomal subunit protein uL22 (111 aa).

Belongs to the universal ribosomal protein uL22 family. As to quaternary structure, part of the 50S ribosomal subunit.

Functionally, this protein binds specifically to 23S rRNA; its binding is stimulated by other ribosomal proteins, e.g. L4, L17, and L20. It is important during the early stages of 50S assembly. It makes multiple contacts with different domains of the 23S rRNA in the assembled 50S subunit and ribosome. The globular domain of the protein is located near the polypeptide exit tunnel on the outside of the subunit, while an extended beta-hairpin is found that lines the wall of the exit tunnel in the center of the 70S ribosome. This chain is Large ribosomal subunit protein uL22, found in Clostridium tetani (strain Massachusetts / E88).